Here is a 180-residue protein sequence, read N- to C-terminus: Large ribosomal subunit protein uL5 (180 aa).

It belongs to the universal ribosomal protein uL5 family. In terms of assembly, part of the 50S ribosomal subunit; part of the 5S rRNA/L5/L18/L25 subcomplex. Contacts the 5S rRNA and the P site tRNA. Forms a bridge to the 30S subunit in the 70S ribosome.

Functionally, this is one of the proteins that bind and probably mediate the attachment of the 5S RNA into the large ribosomal subunit, where it forms part of the central protuberance. In the 70S ribosome it contacts protein S13 of the 30S subunit (bridge B1b), connecting the 2 subunits; this bridge is implicated in subunit movement. Contacts the P site tRNA; the 5S rRNA and some of its associated proteins might help stabilize positioning of ribosome-bound tRNAs. This chain is Large ribosomal subunit protein uL5, found in Xanthomonas campestris pv. campestris (strain 8004).